Here is an 83-residue protein sequence, read N- to C-terminus: MASTTRRNKVEKAPYQDAVTVILNKEGKTYESWSQEIVNSNCLSLLQGENPKWRNKMLEVAAMEIIADSVVKQEEKRQNQTHN.

This is an uncharacterized protein from Bacillus anthracis.